Reading from the N-terminus, the 723-residue chain is Homeobox protein vnd (723 aa).

Disordered stretches follow at residues M1–P115, A224–P307, G465–R549, and H703–P723. Basic and acidic residues predominate over residues T10 to N22. The segment covering S23–P36 has biased composition (low complexity). Over residues Q37–A48 the composition is skewed to polar residues. Over residues L61–F92 the composition is skewed to basic and acidic residues. Residues S97 to S111 are compositionally biased toward low complexity. The span at H226–A235 shows a compositional bias: basic and acidic residues. A compositionally biased stretch (polar residues) spans E237–S255. Residues E278–A289 are compositionally biased toward basic and acidic residues. The span at H298–P307 shows a compositional bias: basic residues. Residues N483–N493 are compositionally biased toward low complexity. Residues L512–D528 are compositionally biased toward acidic residues. The homeobox DNA-binding region spans K545–Q604. The segment covering H703–A716 has biased composition (basic residues).

Belongs to the NK-2 homeobox family. Expressed in the CNS and midgut.

Its subcellular location is the nucleus. In terms of biological role, probable transcriptional regulator involved in the regulation of the proneural AS-C genes and the neurogenic genes of the enhancer of split complex. Could specifically activate proneural genes in the ventral-most neuroectoderm. This chain is Homeobox protein vnd (vnd), found in Drosophila melanogaster (Fruit fly).